A 626-amino-acid polypeptide reads, in one-letter code: Solute carrier family 13 member 4 (626 aa).

The next 4 membrane-spanning stretches (helical) occupy residues 13 to 33, 52 to 72, 77 to 97, and 113 to 133; these read LLLVVCVPLLLLPLPVLHPSS, AVPLGAAALVPAFLYPFFGVL, VAAEYFKNTTLLLVGVICVAA, and VLMAGAKPGMLLLCFMCCTTL. The span at 217-228 shows a compositional bias: polar residues; that stretch reads SITNPIKTANQH. A disordered region spans residues 217-252; the sequence is SITNPIKTANQHQGKKQHPSQEKPQVLTPSPRKQKL. 8 helical membrane passes run 274 to 294, 309 to 329, 372 to 392, 414 to 434, 466 to 486, 499 to 519, 543 to 563, and 590 to 610; these read YSATIGGLTTIIGTSTSLIFL, FGTWFLFSFPISLIMLVVSWF, ISYPEMVTGFFFILMTVLWFT, ATVSVFLGFLLFLIPAKKPCF, IVILVGGGYALASGSKSSGLS, LPPWAVTLLACILVSIVTEFV, PLYTLIPVTMCISFAVMLPVG, and VIGLVIVMVAINTWGVSLFHL.

Belongs to the SLC13A/DASS transporter (TC 2.A.47) family. NADC subfamily. In terms of tissue distribution, highly expressed in placenta and testis with intermediate levels in brain and lower levels in heart, thymus and liver.

It localises to the membrane. The catalysed reaction is sulfate(out) + 3 Na(+)(out) = sulfate(in) + 3 Na(+)(in). With respect to regulation, transport is inhibited by thiosulfate, phosphate, molybdate, selenate and tungstate. Not inhibited by oxalate, citrate, succinate, phenol red or 4,4'-diisothiocyanostilbene-2,2'-disulfonic acid (DIDS). In terms of biological role, sodium:sulfate symporter that mediates sulfate reabsorption in the high endothelial venules (HEV). The sequence is that of Solute carrier family 13 member 4 (SLC13A4) from Homo sapiens (Human).